Here is a 310-residue protein sequence, read N- to C-terminus: Porphobilinogen deaminase (310 aa).

S-(dipyrrolylmethanemethyl)cysteine is present on cysteine 242.

It belongs to the HMBS family. As to quaternary structure, monomer. Requires dipyrromethane as cofactor.

The enzyme catalyses 4 porphobilinogen + H2O = hydroxymethylbilane + 4 NH4(+). Its pathway is porphyrin-containing compound metabolism; protoporphyrin-IX biosynthesis; coproporphyrinogen-III from 5-aminolevulinate: step 2/4. Functionally, tetrapolymerization of the monopyrrole PBG into the hydroxymethylbilane pre-uroporphyrinogen in several discrete steps. In Shewanella halifaxensis (strain HAW-EB4), this protein is Porphobilinogen deaminase.